The sequence spans 419 residues: GTPase Obg (419 aa).

Positions M1–M156 constitute an Obg domain. Residues A157–I334 form the OBG-type G domain. GTP is bound by residues G163–S170, F188–A192, D209–G212, N278–D281, and N315–I317. The Mg(2+) site is built by S170 and T190. An OCT domain is found at I342 to N419.

It belongs to the TRAFAC class OBG-HflX-like GTPase superfamily. OBG GTPase family. In terms of assembly, monomer. Mg(2+) is required as a cofactor.

It is found in the cytoplasm. Its function is as follows. An essential GTPase which binds GTP, GDP and possibly (p)ppGpp with moderate affinity, with high nucleotide exchange rates and a fairly low GTP hydrolysis rate. Plays a role in control of the cell cycle, stress response, ribosome biogenesis and in those bacteria that undergo differentiation, in morphogenesis control. The polypeptide is GTPase Obg (Mesomycoplasma hyopneumoniae (strain J / ATCC 25934 / NCTC 10110) (Mycoplasma hyopneumoniae)).